The primary structure comprises 504 residues: Peroxisome proliferator-activated receptor gamma (504 aa).

Ser-111 is subject to Phosphoserine; by MAPK. The segment at residues Ala-135–Phe-209 is a DNA-binding region (nuclear receptor). 2 consecutive NR C4-type zinc fingers follow at residues Cys-138 to Cys-158 and Cys-175 to Cys-197. The segment at His-204 to Met-279 is interaction with FAM120B. The 266-residue stretch at Asp-237 to Asp-502 folds into the NR LBD domain. Residue Lys-251 forms a Glycyl lysine isopeptide (Lys-Gly) (interchain with G-Cter in ubiquitin) linkage. The 9aaTAD signature appears at Pro-494–Asp-502.

It belongs to the nuclear hormone receptor family. NR1 subfamily. As to quaternary structure, interacts with FOXO1 (acetylated form). Heterodimer with other nuclear receptors, such as RXRA. The heterodimer with the retinoic acid receptor RXRA is called adipocyte-specific transcription factor ARF6. Interacts with NCOA6 coactivator, leading to a strong increase in transcription of target genes. Interacts with coactivator PPARBP, leading to a mild increase in transcription of target genes. Interacts with NOCA7 in a ligand-inducible manner. Interacts with NCOA1 and NCOA2 LXXLL motifs. Interacts with ASXL1, ASXL2, DNTTIP2, FAM120B, MAP2K1/MEK1, NR0B2, PDPK1, PRDM16, PRMT2 and TGFB1I1. Interacts (when activated by agonist) with PPP5C. Interacts with HELZ2 and THRAP3; the interaction stimulates the transcriptional activity of PPARG. Interacts with PER2, the interaction is ligand dependent and blocks PPARG recruitment to target promoters. Interacts with NOCT. Interacts with ACTN4. Interacts (when in the liganded conformation) with GPS2. Interacts with CRY1 and CRY2 in a ligand-dependent manner. In the absence of hormonal ligand, interacts with TACC1. In macrophages, interacts with PAQR3 and STUB1; the interactions promote PPARG poylubiquitination and STUB1-mediated degradation. Post-translationally, phosphorylated at basal conditions and dephosphorylated when treated with the ligand. May be dephosphorylated by PPP5C. The phosphorylated form may be inactive and dephosphorylation induces adipogenic activity. In terms of processing, ubiquitinated by E3 ubiquitin-protein ligase complex containing FBXO9; leading to proteasomal degradation. Ubiquitinated at Lys-251 by TRIM55 leading to proteasomal degradation. Ubiquitinated by E3 ubiquitin-protein ligase STUB1/CHIP; leading to proteasomal degradation. In terms of tissue distribution, highest expression in adipose tissue and lower in spleen. Very low levels in kidney, intestine, lung and muscle.

It localises to the nucleus. Its subcellular location is the cytoplasm. With respect to regulation, PDPK1 activates its transcriptional activity independently of its kinase activity. In terms of biological role, nuclear receptor that binds peroxisome proliferators such as hypolipidemic drugs and fatty acids. Once activated by a ligand, the nuclear receptor binds to DNA specific PPAR response elements (PPRE) and modulates the transcription of its target genes, such as acyl-CoA oxidase. It therefore controls the peroxisomal beta-oxidation pathway of fatty acids. Key regulator of adipocyte differentiation and glucose homeostasis. ARF6 acts as a key regulator of the tissue-specific adipocyte P2 (aP2) enhancer. Acts as a critical regulator of gut homeostasis by suppressing NF-kappa-B-mediated pro-inflammatory responses. Plays a role in the regulation of cardiovascular circadian rhythms by regulating the transcription of BMAL1 in the blood vessels. This Sus scrofa (Pig) protein is Peroxisome proliferator-activated receptor gamma (PPARG).